We begin with the raw amino-acid sequence, 318 residues long: Tyrosine recombinase XerD (318 aa).

A Core-binding (CB) domain is found at Pro5 to Leu90. Residues Gly111–Arg310 enclose the Tyr recombinase domain. Catalysis depends on residues Arg161, Lys185, His262, Arg265, and His288. The active-site O-(3'-phospho-DNA)-tyrosine intermediate is the Tyr297.

Belongs to the 'phage' integrase family. XerD subfamily. As to quaternary structure, forms a cyclic heterotetrameric complex composed of two molecules of XerC and two molecules of XerD.

The protein resides in the cytoplasm. In terms of biological role, site-specific tyrosine recombinase, which acts by catalyzing the cutting and rejoining of the recombining DNA molecules. The XerC-XerD complex is essential to convert dimers of the bacterial chromosome into monomers to permit their segregation at cell division. It also contributes to the segregational stability of plasmids. In Bradyrhizobium diazoefficiens (strain JCM 10833 / BCRC 13528 / IAM 13628 / NBRC 14792 / USDA 110), this protein is Tyrosine recombinase XerD.